Here is a 441-residue protein sequence, read N- to C-terminus: ATP-dependent protease ATPase subunit HslU (441 aa).

ATP-binding positions include isoleucine 18, 60–65 (GVGKTE), aspartate 254, glutamate 319, and arginine 391.

The protein belongs to the ClpX chaperone family. HslU subfamily. A double ring-shaped homohexamer of HslV is capped on each side by a ring-shaped HslU homohexamer. The assembly of the HslU/HslV complex is dependent on binding of ATP.

The protein localises to the cytoplasm. In terms of biological role, ATPase subunit of a proteasome-like degradation complex; this subunit has chaperone activity. The binding of ATP and its subsequent hydrolysis by HslU are essential for unfolding of protein substrates subsequently hydrolyzed by HslV. HslU recognizes the N-terminal part of its protein substrates and unfolds these before they are guided to HslV for hydrolysis. In Shewanella halifaxensis (strain HAW-EB4), this protein is ATP-dependent protease ATPase subunit HslU.